A 147-amino-acid chain; its full sequence is Large ribosomal subunit protein uL15 (147 aa).

The interval 1–46 (MSIRLENLSYTPGARKEKHRKGRGHAAGKGKQAGRGQSGQKKRSTV) is disordered. Basic residues predominate over residues 16 to 28 (KEKHRKGRGHAAG).

It belongs to the universal ribosomal protein uL15 family. Part of the 50S ribosomal subunit.

In terms of biological role, binds to the 23S rRNA. In Mesomycoplasma hyopneumoniae (strain 232) (Mycoplasma hyopneumoniae), this protein is Large ribosomal subunit protein uL15.